The following is a 221-amino-acid chain: Putative efflux system component YhbJ (221 aa).

A helical membrane pass occupies residues 17–37 (LILTNIIGLIVVLAIIAGGAY).

This sequence belongs to the membrane fusion protein (MFP) (TC 8.A.1) family.

The protein localises to the cell membrane. The sequence is that of Putative efflux system component YhbJ (yhbJ) from Bacillus subtilis (strain 168).